Consider the following 528-residue polypeptide: G patch domain-containing protein 2 (528 aa).

The interval 36–119 (LEESSEQARG…NKKDHSDSDD (84 aa)) is disordered. Basic residues predominate over residues 63–77 (RQARKRRGRKRRSYN). Residues 98–117 (EPSKDYRENHNNNKKDHSDS) show a composition bias toward basic and acidic residues. Residues Ser115, Ser117, Ser146, and Ser195 each carry the phosphoserine modification. 2 disordered regions span residues 232-282 (SEET…GDDE) and 487-528 (GRDG…GKSA). The segment covering 239 to 252 (NKDKMECEEQKVSD) has biased composition (basic and acidic residues). One can recognise a G-patch domain in the interval 467–513 (ENNIGNRMLQNMGWTPGSGLGRDGKGISEPIQAMQRPKGLGLGFPLP). Positions 514–528 (KSTSATTTPNAGKSA) are enriched in polar residues.

In terms of assembly, interacts with DHX15. As to expression, testis.

The protein resides in the nucleus speckle. The protein localises to the nucleus. Its subcellular location is the nucleolus. In terms of biological role, enhances the ATPase activity of DHX15 in vitro. This is G patch domain-containing protein 2 (GPATCH2) from Homo sapiens (Human).